The following is a 72-amino-acid chain: Large ribosomal subunit protein bL31 (72 aa).

Residues Cys17, Cys19, Cys37, and Cys40 each contribute to the Zn(2+) site.

Belongs to the bacterial ribosomal protein bL31 family. Type A subfamily. Part of the 50S ribosomal subunit. Zn(2+) is required as a cofactor.

In terms of biological role, binds the 23S rRNA. In Clostridium botulinum (strain ATCC 19397 / Type A), this protein is Large ribosomal subunit protein bL31.